A 101-amino-acid polypeptide reads, in one-letter code: Aspartyl/glutamyl-tRNA(Asn/Gln) amidotransferase subunit C (101 aa).

A disordered region spans residues 75 to 101; the sequence is QEALSGAPDAEEQRFRVPRILDEDVAS. Residues 85–101 are compositionally biased toward basic and acidic residues; it reads EEQRFRVPRILDEDVAS.

It belongs to the GatC family. In terms of assembly, heterotrimer of A, B and C subunits.

The catalysed reaction is L-glutamyl-tRNA(Gln) + L-glutamine + ATP + H2O = L-glutaminyl-tRNA(Gln) + L-glutamate + ADP + phosphate + H(+). It catalyses the reaction L-aspartyl-tRNA(Asn) + L-glutamine + ATP + H2O = L-asparaginyl-tRNA(Asn) + L-glutamate + ADP + phosphate + 2 H(+). Its function is as follows. Allows the formation of correctly charged Asn-tRNA(Asn) or Gln-tRNA(Gln) through the transamidation of misacylated Asp-tRNA(Asn) or Glu-tRNA(Gln) in organisms which lack either or both of asparaginyl-tRNA or glutaminyl-tRNA synthetases. The reaction takes place in the presence of glutamine and ATP through an activated phospho-Asp-tRNA(Asn) or phospho-Glu-tRNA(Gln). This is Aspartyl/glutamyl-tRNA(Asn/Gln) amidotransferase subunit C from Salinispora arenicola (strain CNS-205).